Reading from the N-terminus, the 726-residue chain is Probable dipeptidyl-peptidase 5 (726 aa).

An N-terminal signal peptide occupies residues 1-19 (MAAAKWLIASLAFASSGLA). N-linked (GlcNAc...) asparagine glycosylation is found at Asn96 and Asn252. Residues 269–291 (AEPINKRNGPRTPQGIEGASSSP) form a disordered region. The N-linked (GlcNAc...) asparagine glycan is linked to Asn485. Ser558 functions as the Charge relay system in the catalytic mechanism. A glycan (N-linked (GlcNAc...) asparagine) is linked at Asn605. Residues Asp641 and His673 each act as charge relay system in the active site. The N-linked (GlcNAc...) asparagine glycan is linked to Asn699.

This sequence belongs to the peptidase S9C family.

The protein localises to the secreted. Its function is as follows. Extracellular dipeptidyl-peptidase which removes N-terminal dipeptides sequentially from polypeptides having unsubstituted N-termini. Contributes to pathogenicity. The chain is Probable dipeptidyl-peptidase 5 (DPP5) from Arthroderma benhamiae (strain ATCC MYA-4681 / CBS 112371) (Trichophyton mentagrophytes).